A 1029-amino-acid chain; its full sequence is MFFSGDPSTRKRVDLGGRSTKERDARKLLEQTRMERNRRLLQKQQNSAALKIQKFFRGRRSMAIERSKVRHDFCETYGNNCQNVDRHCFEPGSSFLRQFLFFFKAQNSGDFVILVETCRLLQSFVDSSGDIVSLFSGLDYSSEHNLVDFRVKKLAFTCIEAIHQNRNRLRDQLLVTPEEASISTAILMEAVSLLLDPKLPWVCKIVSYLQKRKVFKLVREMVTTAKESPRGKTMTGNILSLERVLILIVPHIGREPCCCTVVDPRWSFSSMILTIPLIWKLFPNLKVVFANPSLSQHYIHQMASCIQKDTCVLPMETSPEFPGYACLLGNTLDTANVVLSQPECSLDMAIDIALVATFFLETLPPVKSSEGESRQGSSDEDDMLIDDVPGLVLNKALEQQITNAIDSRFLLQLTNVLFRQVSLGMQSYDEDKEALAIGTASSFLYAAFNTLPLERIMTILAYRTELVAVLWNYMKRCHENQKWSSMPKLLAYLPGDAPGWLLPLVVFCPVYKHMLMIVDNEEFYEREKPLSLQDIRLLIIILKQALWQLLWVNPLTQPNTGKSVSNDLSKKNPIELIQNRMGIVVSELLSQLQDWNNRKQFTSSSDFQADSVNEYFISQAIMEGTRANYILMQAPFLIPFTSRVKIFTTQLATARQSHGSQGIFARNRFRIRRDHILEDAYNQMSALSEDDLRSSIRVTFVNELGVEEAGIDGGGIFKDFMEKITRAAFDVQYGLFKETADHMLYPNPGSGMIHEQHLQFFHFLGSLLAKAMFEGILVDIPFATFFLSKLKQKYNYLNDLPSLDPELYRHLIFLKRYKGDISDLELYFVILNNEYGERTEEELLPGGQDMRVTNENVITFIHLVSNHRLNFQIRQQSSHFLRGFQQLIPKEWIDMFNEHELQVLISGSVDSLDIDDLRNNTNYAGGYHAGHYVIDMFWEVMKSFSTENQKKFLKFVTGCSRGPLLGFKYLEPAFCIQRAAGSASNESVDRLPTSATCMNLLKLPPYQSKELLETKLMYAISAEAGFDLS.

Residues 1 to 20 (MFFSGDPSTRKRVDLGGRST) form a disordered region. Over residues 8 to 20 (STRKRVDLGGRST) the composition is skewed to basic and acidic residues. The IQ domain maps to 45-74 (QNSAALKIQKFFRGRRSMAIERSKVRHDFC). One can recognise an HECT domain in the interval 688 to 1029 (SEDDLRSSIR…ISAEAGFDLS (342 aa)). The Glycyl thioester intermediate role is filled by Cys-997.

Belongs to the UPL family.

It catalyses the reaction S-ubiquitinyl-[E2 ubiquitin-conjugating enzyme]-L-cysteine + [acceptor protein]-L-lysine = [E2 ubiquitin-conjugating enzyme]-L-cysteine + N(6)-ubiquitinyl-[acceptor protein]-L-lysine.. The protein operates within protein modification; protein ubiquitination. Its function is as follows. Probable E3 ubiquitin-protein ligase which mediates ubiquitination and subsequent proteasomal degradation of target proteins. The chain is E3 ubiquitin-protein ligase UPL6 (UPL6) from Arabidopsis thaliana (Mouse-ear cress).